A 77-amino-acid chain; its full sequence is Bradykinin-potentiating peptide (77 aa).

The first 22 residues, 1–22 (MNKKTLLVIFIVTLLIADEVNS), serve as a signal peptide directing secretion. The propeptide occupies 74–77 (RRRR).

Belongs to the non-disulfide-bridged peptide (NDBP) superfamily. Long chain multifunctional peptide (group 2) family. As to expression, expressed by the venom gland.

It is found in the secreted. Antimicrobial peptide. May also inhibit angiotensin-converting enzyme (ACE) and potentiate bradykinin (BK). This Tityus discrepans (Venezuelan scorpion) protein is Bradykinin-potentiating peptide.